The primary structure comprises 865 residues: Aconitate hydratase B (865 aa).

Residues Arg-191, 244–246 (SSR), 414–416 (QDT), and Ser-498 contribute to the substrate site. Cys-710, Cys-769, and Cys-772 together coordinate [4Fe-4S] cluster. 2 residues coordinate substrate: Arg-791 and Arg-796.

This sequence belongs to the aconitase/IPM isomerase family. Monomer. [4Fe-4S] cluster is required as a cofactor.

It carries out the reaction citrate = D-threo-isocitrate. The catalysed reaction is (2S,3R)-3-hydroxybutane-1,2,3-tricarboxylate = 2-methyl-cis-aconitate + H2O. It functions in the pathway carbohydrate metabolism; tricarboxylic acid cycle; isocitrate from oxaloacetate: step 2/2. The protein operates within organic acid metabolism; propanoate degradation. Functionally, involved in the catabolism of short chain fatty acids (SCFA) via the tricarboxylic acid (TCA)(acetyl degradation route) and the 2-methylcitrate cycle I (propionate degradation route). Catalyzes the reversible isomerization of citrate to isocitrate via cis-aconitate. Also catalyzes the hydration of 2-methyl-cis-aconitate to yield (2R,3S)-2-methylisocitrate. The apo form of AcnB functions as a RNA-binding regulatory protein which regulates FliC synthesis via interaction with the ftsH transcript to decrease the intracellular levels of FtsH. The lower levels of FtsH protease activity then influence sigma-32, DnaK and ultimately FliC production. In Salmonella typhimurium (strain LT2 / SGSC1412 / ATCC 700720), this protein is Aconitate hydratase B (acnB).